The following is a 683-amino-acid chain: DNA ligase (683 aa).

NAD(+) contacts are provided by residues 36-40 (DAEYD), 85-86 (SL), and glutamate 119. Lysine 121 functions as the N6-AMP-lysine intermediate in the catalytic mechanism. Residues arginine 142, glutamate 179, lysine 295, and lysine 319 each coordinate NAD(+). Zn(2+) contacts are provided by cysteine 413, cysteine 416, cysteine 431, and cysteine 437. The BRCT domain occupies 596–683 (TETLPLSGQT…EHQAHLGGEA (88 aa)).

Belongs to the NAD-dependent DNA ligase family. LigA subfamily. Mg(2+) is required as a cofactor. Requires Mn(2+) as cofactor.

The enzyme catalyses NAD(+) + (deoxyribonucleotide)n-3'-hydroxyl + 5'-phospho-(deoxyribonucleotide)m = (deoxyribonucleotide)n+m + AMP + beta-nicotinamide D-nucleotide.. Its function is as follows. DNA ligase that catalyzes the formation of phosphodiester linkages between 5'-phosphoryl and 3'-hydroxyl groups in double-stranded DNA using NAD as a coenzyme and as the energy source for the reaction. It is essential for DNA replication and repair of damaged DNA. This chain is DNA ligase, found in Hahella chejuensis (strain KCTC 2396).